Consider the following 355-residue polypeptide: 3-dehydroquinate synthase (355 aa).

Residues 105–109 (GVVGD), 129–130 (TS), K142, K151, and 169–172 (TLKT) each bind NAD(+). Residues E184, H246, and H263 each coordinate Zn(2+).

Belongs to the sugar phosphate cyclases superfamily. Dehydroquinate synthase family. Requires NAD(+) as cofactor. Co(2+) is required as a cofactor. Zn(2+) serves as cofactor.

The protein localises to the cytoplasm. The catalysed reaction is 7-phospho-2-dehydro-3-deoxy-D-arabino-heptonate = 3-dehydroquinate + phosphate. The protein operates within metabolic intermediate biosynthesis; chorismate biosynthesis; chorismate from D-erythrose 4-phosphate and phosphoenolpyruvate: step 2/7. Its function is as follows. Catalyzes the conversion of 3-deoxy-D-arabino-heptulosonate 7-phosphate (DAHP) to dehydroquinate (DHQ). The sequence is that of 3-dehydroquinate synthase from Streptococcus agalactiae serotype V (strain ATCC BAA-611 / 2603 V/R).